Reading from the N-terminus, the 443-residue chain is Xaa-Pro dipeptidase (443 aa).

Mn(2+) contacts are provided by Asp-246, Asp-257, His-339, Glu-384, and Glu-423.

Belongs to the peptidase M24B family. Bacterial-type prolidase subfamily. The cofactor is Mn(2+).

It carries out the reaction Xaa-L-Pro dipeptide + H2O = an L-alpha-amino acid + L-proline. In terms of biological role, splits dipeptides with a prolyl residue in the C-terminal position. The sequence is that of Xaa-Pro dipeptidase from Escherichia fergusonii (strain ATCC 35469 / DSM 13698 / CCUG 18766 / IAM 14443 / JCM 21226 / LMG 7866 / NBRC 102419 / NCTC 12128 / CDC 0568-73).